The primary structure comprises 523 residues: Ribosomal protein uS12 methylthiotransferase RimO (523 aa).

Positions 7 to 134 (RRVALITLGC…IATHLAAVLA (128 aa)) constitute an MTTase N-terminal domain. [4Fe-4S] cluster-binding residues include C16, C52, C97, C192, C196, and C199. Positions 178–409 (LTAGPVAVLK…DLVEQLTAAR (232 aa)) constitute a Radical SAM core domain. A TRAM domain is found at 411–492 (DARIGSRVQV…GVDLIAEFIA (82 aa)).

The protein belongs to the methylthiotransferase family. RimO subfamily. Requires [4Fe-4S] cluster as cofactor.

Its subcellular location is the cytoplasm. It catalyses the reaction L-aspartate(89)-[ribosomal protein uS12]-hydrogen + (sulfur carrier)-SH + AH2 + 2 S-adenosyl-L-methionine = 3-methylsulfanyl-L-aspartate(89)-[ribosomal protein uS12]-hydrogen + (sulfur carrier)-H + 5'-deoxyadenosine + L-methionine + A + S-adenosyl-L-homocysteine + 2 H(+). Catalyzes the methylthiolation of an aspartic acid residue of ribosomal protein uS12. The polypeptide is Ribosomal protein uS12 methylthiotransferase RimO (Frankia casuarinae (strain DSM 45818 / CECT 9043 / HFP020203 / CcI3)).